We begin with the raw amino-acid sequence, 119 residues long: Ribonuclease P protein component (119 aa).

It belongs to the RnpA family. Consists of a catalytic RNA component (M1 or rnpB) and a protein subunit.

It catalyses the reaction Endonucleolytic cleavage of RNA, removing 5'-extranucleotides from tRNA precursor.. Its function is as follows. RNaseP catalyzes the removal of the 5'-leader sequence from pre-tRNA to produce the mature 5'-terminus. It can also cleave other RNA substrates such as 4.5S RNA. The protein component plays an auxiliary but essential role in vivo by binding to the 5'-leader sequence and broadening the substrate specificity of the ribozyme. This chain is Ribonuclease P protein component, found in Streptococcus gordonii (strain Challis / ATCC 35105 / BCRC 15272 / CH1 / DL1 / V288).